The chain runs to 92 residues: DNA/RNA-binding protein Alba (92 aa).

The residue at position 11 (lysine 11) is an N6-acetyllysine.

Belongs to the histone-like Alba family. Acetylated. Acetylation at Lys-11 decreases DNA-binding affinity.

It localises to the cytoplasm. The protein localises to the chromosome. In terms of biological role, binds double-stranded DNA tightly but without sequence specificity. Involved in DNA compaction. The polypeptide is DNA/RNA-binding protein Alba (Pyrobaculum neutrophilum (strain DSM 2338 / JCM 9278 / NBRC 100436 / V24Sta) (Thermoproteus neutrophilus)).